The chain runs to 166 residues: Lipoprotein signal peptidase (166 aa).

4 helical membrane passes run 9-29 (ASGA…FDQL), 45-65 (ALTS…FGFL), 71-91 (WQRW…CFLL), and 100-120 (FSVS…DRLV). Active-site residues include aspartate 126 and aspartate 144. The chain crosses the membrane as a helical span at residues 135–155 (WHFPAFNLADSAITIGAVLLI).

It belongs to the peptidase A8 family.

It localises to the cell inner membrane. The enzyme catalyses Release of signal peptides from bacterial membrane prolipoproteins. Hydrolyzes -Xaa-Yaa-Zaa-|-(S,diacylglyceryl)Cys-, in which Xaa is hydrophobic (preferably Leu), and Yaa (Ala or Ser) and Zaa (Gly or Ala) have small, neutral side chains.. It participates in protein modification; lipoprotein biosynthesis (signal peptide cleavage). Its function is as follows. This protein specifically catalyzes the removal of signal peptides from prolipoproteins. This is Lipoprotein signal peptidase from Burkholderia cenocepacia (strain ATCC BAA-245 / DSM 16553 / LMG 16656 / NCTC 13227 / J2315 / CF5610) (Burkholderia cepacia (strain J2315)).